We begin with the raw amino-acid sequence, 287 residues long: Cell division protein ZipA (287 aa).

Residue Met-1 is a topological domain, periplasmic. Residues 2–22 traverse the membrane as a helical segment; the sequence is EIGLREWLIVIGIIVIAGILF. The Cytoplasmic portion of the chain corresponds to 23–287; the sequence is DGWRRMRGGK…FERRALTQKR (265 aa). The tract at residues 70–143 is disordered; sequence LDEHDLPSMS…APRQSVNDQP (74 aa).

Belongs to the ZipA family. In terms of assembly, interacts with FtsZ via their C-terminal domains.

It localises to the cell inner membrane. Essential cell division protein that stabilizes the FtsZ protofilaments by cross-linking them and that serves as a cytoplasmic membrane anchor for the Z ring. Also required for the recruitment to the septal ring of downstream cell division proteins. The polypeptide is Cell division protein ZipA (Pseudomonas fluorescens (strain SBW25)).